The sequence spans 228 residues: Response regulator SaeR (228 aa).

A Response regulatory domain is found at 3-116 (HLLIVDDEQD…ELVLRINNLL (114 aa)). D51 is subject to 4-aspartylphosphate. Residues 127–226 (VEQLSFDELT…VWGLGYKFER (100 aa)) constitute a DNA-binding region (ompR/PhoB-type).

In terms of processing, phosphorylated by SaeS.

The protein localises to the cytoplasm. Functionally, member of the two-component regulatory system SaeR/SaeS involved in the regulation of staphylococcal virulence factors in a strain-dependent fashion. Probably functions as a transcriptional regulator via a specific DNA-binding domain, recognizing motifs near the promoter sequences of target genes. The chain is Response regulator SaeR (saeR) from Staphylococcus aureus (strain USA300).